The primary structure comprises 288 residues: Acetyl-coenzyme A carboxylase carboxyl transferase subunit beta (288 aa).

The CoA carboxyltransferase N-terminal domain maps to Leu-34 to Arg-288. Residues Cys-38, Cys-41, Cys-56, and Cys-59 each contribute to the Zn(2+) site. A C4-type zinc finger spans residues Cys-38–Cys-59.

Belongs to the AccD/PCCB family. In terms of assembly, acetyl-CoA carboxylase is a heterohexamer composed of biotin carboxyl carrier protein (AccB), biotin carboxylase (AccC) and two subunits each of ACCase subunit alpha (AccA) and ACCase subunit beta (AccD). Zn(2+) is required as a cofactor.

The protein localises to the cytoplasm. The enzyme catalyses N(6)-carboxybiotinyl-L-lysyl-[protein] + acetyl-CoA = N(6)-biotinyl-L-lysyl-[protein] + malonyl-CoA. It participates in lipid metabolism; malonyl-CoA biosynthesis; malonyl-CoA from acetyl-CoA: step 1/1. Functionally, component of the acetyl coenzyme A carboxylase (ACC) complex. Biotin carboxylase (BC) catalyzes the carboxylation of biotin on its carrier protein (BCCP) and then the CO(2) group is transferred by the transcarboxylase to acetyl-CoA to form malonyl-CoA. The polypeptide is Acetyl-coenzyme A carboxylase carboxyl transferase subunit beta (Streptococcus suis (strain 98HAH33)).